A 443-amino-acid polypeptide reads, in one-letter code: Diels-Alderase poxQ (443 aa).

An N-terminal signal peptide occupies residues 1–23 (MARIPLEFLSITLPVLLLAYCLA). Residues Asn-78, Asn-97, and Asn-145 are each glycosylated (N-linked (GlcNAc...) asparagine).

This sequence belongs to the Diels-Alderase family.

Its pathway is secondary metabolite biosynthesis. In terms of biological role, diels-Alderase; part of the gene cluster that mediates the biosynthesis of oxaleimides, cytotoxic compounds containing an unusual disubstituted succinimide moiety. The first step of the pathway is provided by the HR-PKS poxF that serves in a new mode of collaborative biosynthesis with the PKS-NRPS poxE, by providing the olefin containing amino acid substrate via the synthesis of an ACP-bound dec-4-enoate. The cytochrome P450 monooxygenase poxM-catalyzed oxidation at the alpha-position creates the enzyme-bound 2-hydroxydec-4-enoyl-ACP thioester, which may be prone to spontaneous hydrolysis to yield 2-hydroxydec-4-enoic acid due to increased electrophilicity of the carbonyl. 2-hydroxydec-4-enoic acid can then be further oxidized by poxM to yield the alpha-ketoacid 2-oxodec-4-enoicacid, which is reductively aminated by the aminotransferase poxL to yield (S,E)-2-aminodec-4-enoic acid. The Hybrid PKS-NRPS synthetase poxE then performs condensation between the octaketide product of its PKS modules and the amino group of (S,E)-2-aminodec-4-enoic acid which is activated and incorporated by the adenylation domain. The resulting aminoacyl product can be cyclized by the Diels-Alderase PoxQ and reductively released by the reductive (R) domain of poxE to yield an aldehyde intermediate. The released aldehyde is then substrate for a Knoevenagel condensation by the hydrolyase poxO followed by an oxidation at the 5-position of the pyrrolidone ring. The presence of the olefin from the amino acid building block allows for migration of the substituted allyl group to occur. This allylic transposition reaction takes place in a conjugate addition, semipinacol-like fashion to yield a succinimide intermediate. Iterative two-electron oxidations of the C7 methyl of the succinimide intermediate to the carboxylic acid can be catalyzed by one of two remaining cytochrome P450 monooxygenasess poxC or poxD to yield oxaleimide A. Subsequent oxidation yields the maleimide scaffold oxaleimide I. Both oxaleimide A and oxaleimide I can undergo oxidative modifications in the decalin ring to yield the series of products oxaleimides B to H. The protein is Diels-Alderase poxQ of Penicillium oxalicum.